The chain runs to 79 residues: Small ribosomal subunit protein bS18 (79 aa).

In terms of assembly, part of the 30S ribosomal subunit. Forms a tight heterodimer with protein bS6. In terms of processing, both N-terminus methionine truncation and retention have been observed for this protein. May be methylated up to 6 times, on undetermined residues.

In terms of biological role, binds as a heterodimer with protein bS6 to the central domain of the 16S rRNA, where it helps stabilize the platform of the 30S subunit. The chain is Small ribosomal subunit protein bS18 from Rhodopseudomonas palustris (strain ATCC BAA-98 / CGA009).